A 268-amino-acid polypeptide reads, in one-letter code: UPF0328 protein ECU09_2030 (268 aa).

Belongs to the UPF0328 family.

The polypeptide is UPF0328 protein ECU09_2030 (Encephalitozoon cuniculi (strain GB-M1) (Microsporidian parasite)).